The sequence spans 615 residues: Elongation factor 4 (615 aa).

In terms of domain architecture, tr-type G spans 14–200 (QQIRNFCIIA…KVAELIPAPT (187 aa)). Residues 26–31 (DHGKST) and 147–150 (NKID) contribute to the GTP site.

Belongs to the TRAFAC class translation factor GTPase superfamily. Classic translation factor GTPase family. LepA subfamily.

Its subcellular location is the cell membrane. The catalysed reaction is GTP + H2O = GDP + phosphate + H(+). Required for accurate and efficient protein synthesis under certain stress conditions. May act as a fidelity factor of the translation reaction, by catalyzing a one-codon backward translocation of tRNAs on improperly translocated ribosomes. Back-translocation proceeds from a post-translocation (POST) complex to a pre-translocation (PRE) complex, thus giving elongation factor G a second chance to translocate the tRNAs correctly. Binds to ribosomes in a GTP-dependent manner. The polypeptide is Elongation factor 4 (Corynebacterium diphtheriae (strain ATCC 700971 / NCTC 13129 / Biotype gravis)).